The chain runs to 390 residues: Phosphopentomutase (390 aa).

D9, D283, H288, D324, H325, and H336 together coordinate Mn(2+).

It belongs to the phosphopentomutase family. Requires Mn(2+) as cofactor.

The protein localises to the cytoplasm. It carries out the reaction 2-deoxy-alpha-D-ribose 1-phosphate = 2-deoxy-D-ribose 5-phosphate. The enzyme catalyses alpha-D-ribose 1-phosphate = D-ribose 5-phosphate. The protein operates within carbohydrate degradation; 2-deoxy-D-ribose 1-phosphate degradation; D-glyceraldehyde 3-phosphate and acetaldehyde from 2-deoxy-alpha-D-ribose 1-phosphate: step 1/2. Functionally, isomerase that catalyzes the conversion of deoxy-ribose 1-phosphate (dRib-1-P) and ribose 1-phosphate (Rib-1-P) to deoxy-ribose 5-phosphate (dRib-5-P) and ribose 5-phosphate (Rib-5-P), respectively. This is Phosphopentomutase from Thermotoga maritima (strain ATCC 43589 / DSM 3109 / JCM 10099 / NBRC 100826 / MSB8).